A 1577-amino-acid polypeptide reads, in one-letter code: Pentafunctional AROM polypeptide (1577 aa).

The interval 1-392 (MASVGLEKVN…YGTSAHVVSD (392 aa)) is 3-dehydroquinate synthase. Residues 80 to 83 (ETYK), 111 to 113 (GGV), and D116 each bind NAD(+). Residue R127 participates in 7-phospho-2-dehydro-3-deoxy-D-arabino-heptonate binding. 136–137 (TS) serves as a coordination point for NAD(+). 7-phospho-2-dehydro-3-deoxy-D-arabino-heptonate contacts are provided by D143 and K149. K158 contributes to the NAD(+) binding site. Residue N159 coordinates 7-phospho-2-dehydro-3-deoxy-D-arabino-heptonate. NAD(+)-binding positions include 176–179 (WLET) and N187. Position 191 (E191) interacts with Zn(2+). Residues 191–194 (EVIK) and K258 each bind 7-phospho-2-dehydro-3-deoxy-D-arabino-heptonate. Residue E268 is the Proton acceptor; for 3-dehydroquinate synthase activity of the active site. 7-phospho-2-dehydro-3-deoxy-D-arabino-heptonate contacts are provided by residues 272-276 (RNLLN) and H279. Zn(2+) is bound at residue H279. H283 acts as the Proton acceptor; for 3-dehydroquinate synthase activity in catalysis. 2 residues coordinate 7-phospho-2-dehydro-3-deoxy-D-arabino-heptonate: H295 and K364. H295 serves as a coordination point for Zn(2+). Residues 405 to 863 (VYPFTDVRSS…WDVLHSRLGA (459 aa)) are EPSP synthase. C845 functions as the For EPSP synthase activity in the catalytic mechanism. A shikimate kinase region spans residues 882 to 1071 (VVLIGMRAAG…VPVKRSTFVC (190 aa)). Position 886–893 (886–893 (GMRAAGKS)) interacts with ATP. Positions 1072 to 1284 (LTFQNLLPEM…AAPGQLTLRQ (213 aa)) are 3-dehydroquinase. The Proton acceptor; for 3-dehydroquinate dehydratase activity role is filled by H1189. K1218 functions as the Schiff-base intermediate with substrate; for 3-dehydroquinate dehydratase activity in the catalytic mechanism. The segment at 1297–1577 (PKKMFVVGSP…APVYDAVTQE (281 aa)) is shikimate dehydrogenase.

It in the N-terminal section; belongs to the sugar phosphate cyclases superfamily. Dehydroquinate synthase family. This sequence in the 2nd section; belongs to the EPSP synthase family. In the 3rd section; belongs to the shikimate kinase family. The protein in the 4th section; belongs to the type-I 3-dehydroquinase family. It in the C-terminal section; belongs to the shikimate dehydrogenase family. Homodimer. It depends on Zn(2+) as a cofactor.

It localises to the cytoplasm. It catalyses the reaction 7-phospho-2-dehydro-3-deoxy-D-arabino-heptonate = 3-dehydroquinate + phosphate. It carries out the reaction 3-dehydroquinate = 3-dehydroshikimate + H2O. The enzyme catalyses shikimate + NADP(+) = 3-dehydroshikimate + NADPH + H(+). The catalysed reaction is shikimate + ATP = 3-phosphoshikimate + ADP + H(+). It catalyses the reaction 3-phosphoshikimate + phosphoenolpyruvate = 5-O-(1-carboxyvinyl)-3-phosphoshikimate + phosphate. It functions in the pathway metabolic intermediate biosynthesis; chorismate biosynthesis; chorismate from D-erythrose 4-phosphate and phosphoenolpyruvate: step 2/7. Its pathway is metabolic intermediate biosynthesis; chorismate biosynthesis; chorismate from D-erythrose 4-phosphate and phosphoenolpyruvate: step 3/7. The protein operates within metabolic intermediate biosynthesis; chorismate biosynthesis; chorismate from D-erythrose 4-phosphate and phosphoenolpyruvate: step 4/7. It participates in metabolic intermediate biosynthesis; chorismate biosynthesis; chorismate from D-erythrose 4-phosphate and phosphoenolpyruvate: step 5/7. It functions in the pathway metabolic intermediate biosynthesis; chorismate biosynthesis; chorismate from D-erythrose 4-phosphate and phosphoenolpyruvate: step 6/7. Its function is as follows. The AROM polypeptide catalyzes 5 consecutive enzymatic reactions in prechorismate polyaromatic amino acid biosynthesis. This Eremothecium gossypii (strain ATCC 10895 / CBS 109.51 / FGSC 9923 / NRRL Y-1056) (Yeast) protein is Pentafunctional AROM polypeptide.